A 209-amino-acid chain; its full sequence is MGTEMVMVHEVPFPPQIITSKPLSLLGQGITDIEIHFLQVKFTAIGVYLDPSDVKTHLDNWKGKTGKELAGDDDFFDALASAEMEKVIRVVVIKEIKGAQYGVQLENTVRDRLAEEDKYEEEEETELEKVVGFFQSKYFKANSVITYHFSAKDGICEIGFETEGKEEEKLKVENANVVGMMQRWYLSGSRGVSPSTIVSIADSISAVLT.

It belongs to the chalcone isomerase family.

It carries out the reaction a chalcone = a flavanone.. Its pathway is secondary metabolite biosynthesis; flavonoid biosynthesis. Functionally, involved in anthocyanin biosynthesis. This is Probable chalcone--flavanone isomerase 3 (CHI3) from Arabidopsis thaliana (Mouse-ear cress).